We begin with the raw amino-acid sequence, 508 residues long: Strychnine-11-hydroxylase (508 aa).

A helical membrane pass occupies residues 5–25; that stretch reads MSFLLLFSLCFLIHCFVFLLI. C445 contacts heme.

Belongs to the cytochrome P450 family. Requires heme as cofactor.

The protein resides in the membrane. The enzyme catalyses beta-colubrine + reduced [NADPH--hemoprotein reductase] + O2 = 11-demethylbrucine + oxidized [NADPH--hemoprotein reductase] + H2O + H(+). The protein operates within alkaloid biosynthesis. Its function is as follows. Monooxygenase involved in the biosynthesis of curare monoterpene indole alkaloids (MIAs), natural products such as strychnine, a neurotoxic compound used as a pesticide to control rodents, and its pharmacologically active derivatives, including brucine, used to regulate blood pressure. Curare alkaloids act as animal glycine receptor antagonists. Catalyzes the conversion of beta-colubrine to 11-deMe brucine. In Strychnos nux-vomica (Poison nut), this protein is Strychnine-11-hydroxylase.